Reading from the N-terminus, the 123-residue chain is Large ribosomal subunit protein uL14 (123 aa).

The protein belongs to the universal ribosomal protein uL14 family. As to quaternary structure, part of the 50S ribosomal subunit. Forms a cluster with proteins L3 and L19. In the 70S ribosome, L14 and L19 interact and together make contacts with the 16S rRNA in bridges B5 and B8.

In terms of biological role, binds to 23S rRNA. Forms part of two intersubunit bridges in the 70S ribosome. In Photobacterium profundum (strain SS9), this protein is Large ribosomal subunit protein uL14.